Reading from the N-terminus, the 1417-residue chain is DNA-directed RNA polymerase subunit beta' (1417 aa).

The Zn(2+) site is built by Cys-71, Cys-73, Cys-86, and Cys-89. Asp-461, Asp-463, and Asp-465 together coordinate Mg(2+). Zn(2+) contacts are provided by Cys-815, Cys-889, Cys-896, and Cys-899.

Belongs to the RNA polymerase beta' chain family. In terms of assembly, the RNAP catalytic core consists of 2 alpha, 1 beta, 1 beta' and 1 omega subunit. When a sigma factor is associated with the core the holoenzyme is formed, which can initiate transcription. The cofactor is Mg(2+). It depends on Zn(2+) as a cofactor.

The enzyme catalyses RNA(n) + a ribonucleoside 5'-triphosphate = RNA(n+1) + diphosphate. In terms of biological role, DNA-dependent RNA polymerase catalyzes the transcription of DNA into RNA using the four ribonucleoside triphosphates as substrates. This chain is DNA-directed RNA polymerase subunit beta', found in Pasteurella multocida (strain Pm70).